The chain runs to 235 residues: MSVISMKQLLEAGVHFGHQTRRWNPKMKKYIFTERNGIYIIDLQKTVKKVEEAYNFVRELAGNGGKILFVGTKKQAQESVKEEAERCGMFYVNQRWLGGTLTNFATIQKRIKRLREIEKMEEDGVFDVLPKKEVIGLKKEKERLEKFLGGIKDMKELPDALFVIDPRKERIAVAEARKLNIPIIGIVDTNCDPDEIDYVIPANDDAIRAVKLLTSKIADAVLEAKQGEEAAVAAE.

It belongs to the universal ribosomal protein uS2 family.

This Geobacillus thermodenitrificans (strain NG80-2) protein is Small ribosomal subunit protein uS2.